The sequence spans 411 residues: MTEPITVPTPQQIIEPAVAGRTETMVLNMGPHHPSTHGVLRLVLELDGEVVVNVAPDVGYLHTGIEKTMESKTYQKAVVLTDRMDYLAPLSNNLCYALAVEKLLDVEIPERAQIARVLLTELQRISSHLVWLGTHALDLAAMSVFLYAFREREQILDIFELVSGARMMTSYFRIGGLAYDLPSDFIPTVEQFLAVMPSRIDEYEDLLTANPLWLERTVGVGVIDAQSAIALGLTGANLRATGVAYDVRKAMPYSGYETYSFEIPVGKNGDIYDRYRVRIAEMRQSVKIVQQATERLRELGPGPVVTSNRKVAPPPKREITESMESLIHHFKLWTEGFKPPRGDAYVSIESPRGILGCYVVSDGSPKPWRVHFRAPSFINLQSLAHMAKGRMVADLVALIASLDPVLGEVDR.

Belongs to the complex I 49 kDa subunit family. As to quaternary structure, NDH-1 is composed of 14 different subunits. Subunits NuoB, C, D, E, F, and G constitute the peripheral sector of the complex.

Its subcellular location is the cell membrane. The enzyme catalyses a quinone + NADH + 5 H(+)(in) = a quinol + NAD(+) + 4 H(+)(out). Functionally, NDH-1 shuttles electrons from NADH, via FMN and iron-sulfur (Fe-S) centers, to quinones in the respiratory chain. The immediate electron acceptor for the enzyme in this species is believed to be ubiquinone. Couples the redox reaction to proton translocation (for every two electrons transferred, four hydrogen ions are translocated across the cytoplasmic membrane), and thus conserves the redox energy in a proton gradient. The protein is NADH-quinone oxidoreductase subunit D 2 of Chloroflexus aurantiacus (strain ATCC 29366 / DSM 635 / J-10-fl).